A 1257-amino-acid polypeptide reads, in one-letter code: Liprin-alpha-2 (1257 aa).

3 disordered regions span residues M1–S29, A231–D265, and E438–K463. The segment covering S16–D26 has biased composition (low complexity). Coiled coils occupy residues S29–M154, K185–E541, and H643–L695. S236 carries the phosphoserine modification. T237 is subject to Phosphothreonine. A compositionally biased stretch (basic and acidic residues) spans E238 to L256. At S239 the chain carries Phosphoserine. A phosphoserine mark is found at S687 and S689. Composition is skewed to low complexity over residues T709–P725 and S798–S813. Disordered stretches follow at residues T709–R738 and S790–I834. S817 and S820 each carry phosphoserine. 3 consecutive SAM domains span residues W898–L964, N1020–L1084, and W1108–L1177. A coiled-coil region spans residues L1081–V1107.

Belongs to the liprin family. Liprin-alpha subfamily. In terms of assembly, forms homodimers and heterodimers with liprins-alpha and liprins-beta. Interacts with the second PTPase domain of PTPRD, PTPRF and PTPRS. Interacts with KIF1A; the interaction decreases in presence of calcium. Expressed only in brain.

Its subcellular location is the cytoplasm. It is found in the cell surface. The protein resides in the cell projection. The protein localises to the dendritic spine. Its function is as follows. Alters PTPRF cellular localization and induces PTPRF clustering. May regulate the disassembly of focal adhesions. May localize receptor-like tyrosine phosphatases type 2A at specific sites on the plasma membrane, possibly regulating their interaction with the extracellular environment and their association with substrates. In neuronal cells, is a scaffolding protein in the dendritic spines which acts as immobile postsynaptic post able to recruit KIF1A-driven dense core vesicles to dendritic spines. This Homo sapiens (Human) protein is Liprin-alpha-2 (PPFIA2).